The chain runs to 438 residues: MSTNFSVPEPTPQLVKVAESAKEASISLGQSTNKQRCEALTEMANALNDNADEILKANVQDLERSEKEGLNKSLLSRLQLTKTKLKGCIDGVLKVSNLADPIGKRQLHRELNENLILERVTVPLGVLGVIFESRPDALIQIASLAVRSGNGALLKGGSEAKDTNQAIMDSLDKGLRKANVGSGALSLLTTRQESLGLLRLDKFVNLIIPRGSNELVQFIQENTRIPVLGHADGICHLYVDNSVDIDKAISIALDSKIQYPAACNAIETLLIHEDIAEMFLKKGLPIFSSEGVTLKGDTKSQALGVKNKADESDWSKEYLDLILSIKIVRNVNEAIEHIRKYSSRHTEAIVTEDKMVAEKFLSSVDSAGVYHNCSTRFADGFRYGFGAEVGISTQTLPPRGPVGLEGLVTYRYYLRGDGDLVKDFASGDRSFSHIDLPL.

It belongs to the gamma-glutamyl phosphate reductase family.

The protein localises to the cytoplasm. The catalysed reaction is L-glutamate 5-semialdehyde + phosphate + NADP(+) = L-glutamyl 5-phosphate + NADPH + H(+). Its pathway is amino-acid biosynthesis; L-proline biosynthesis; L-glutamate 5-semialdehyde from L-glutamate: step 2/2. Catalyzes the NADPH-dependent reduction of L-glutamate 5-phosphate into L-glutamate 5-semialdehyde and phosphate. The product spontaneously undergoes cyclization to form 1-pyrroline-5-carboxylate. This is Gamma-glutamyl phosphate reductase from Prochlorococcus marinus (strain NATL2A).